Reading from the N-terminus, the 228-residue chain is MAKIKEKFDNVFELDLGDGIKRIGTKSLVPNKRVYGEKLVNVKNTEYRVWNPNKSKLGASIINGLKEMPIKKGSKVLYLGASAGTTPSHVADVAEDSPVYAVEFAPRIMREFIESCEGRKNLFPILGDANKPEEYANIVEKVDVIFEDVAQPNQAEILIKNAKWFLKKGGYGMISIKARSVDVTENPRVIFEAQKEIMEQNGFKIVDAINIEPFEKDHMLFVGIWNGQ.

Residues Thr85 to Thr86, Glu103 to Phe104, Asp128 to Ala129, and Asp148 to Gln151 each bind S-adenosyl-L-methionine.

This sequence belongs to the methyltransferase superfamily. Fibrillarin family. Interacts with nop5. Component of box C/D small ribonucleoprotein (sRNP) particles that contain rpl7ae, FlpA and nop5, plus a guide RNA.

In terms of biological role, involved in pre-rRNA and tRNA processing. Utilizes the methyl donor S-adenosyl-L-methionine to catalyze the site-specific 2'-hydroxyl methylation of ribose moieties in rRNA and tRNA. Site specificity is provided by a guide RNA that base pairs with the substrate. Methylation occurs at a characteristic distance from the sequence involved in base pairing with the guide RNA. The protein is Fibrillarin-like rRNA/tRNA 2'-O-methyltransferase of Methanococcus voltae.